A 204-amino-acid chain; its full sequence is Holliday junction branch migration complex subunit RuvA (204 aa).

The interval 1 to 64 (MIAQIRGKLI…QDSILLVGFC (64 aa)) is domain I. Residues 65-143 (TENEKQLFKL…GWTSKEQITF (79 aa)) form a domain II region. The flexible linker stretch occupies residues 144–154 (INNKKDAIDQS). Residues 154 to 204 (SVMEEDAISALINLGYKSQAAKDAIDRVISEGGENKSLDVILKKALKVLAM) form a domain III region.

The protein belongs to the RuvA family. As to quaternary structure, homotetramer. Forms an RuvA(8)-RuvB(12)-Holliday junction (HJ) complex. HJ DNA is sandwiched between 2 RuvA tetramers; dsDNA enters through RuvA and exits via RuvB. An RuvB hexamer assembles on each DNA strand where it exits the tetramer. Each RuvB hexamer is contacted by two RuvA subunits (via domain III) on 2 adjacent RuvB subunits; this complex drives branch migration. In the full resolvosome a probable DNA-RuvA(4)-RuvB(12)-RuvC(2) complex forms which resolves the HJ.

Its subcellular location is the cytoplasm. Functionally, the RuvA-RuvB-RuvC complex processes Holliday junction (HJ) DNA during genetic recombination and DNA repair, while the RuvA-RuvB complex plays an important role in the rescue of blocked DNA replication forks via replication fork reversal (RFR). RuvA specifically binds to HJ cruciform DNA, conferring on it an open structure. The RuvB hexamer acts as an ATP-dependent pump, pulling dsDNA into and through the RuvAB complex. HJ branch migration allows RuvC to scan DNA until it finds its consensus sequence, where it cleaves and resolves the cruciform DNA. The chain is Holliday junction branch migration complex subunit RuvA from Syntrophus aciditrophicus (strain SB).